A 128-amino-acid polypeptide reads, in one-letter code: L-ectoine synthase (128 aa).

It belongs to the ectoine synthase family.

It catalyses the reaction (2S)-4-acetamido-2-aminobutanoate = L-ectoine + H2O. It functions in the pathway amine and polyamine biosynthesis; ectoine biosynthesis; L-ectoine from L-aspartate 4-semialdehyde: step 3/3. Functionally, catalyzes the circularization of gamma-N-acetyl-alpha,gamma-diaminobutyric acid (ADABA) to ectoine (1,4,5,6-tetrahydro-2-methyl-4-pyrimidine carboxylic acid), which is an excellent osmoprotectant. This Oceanobacillus iheyensis (strain DSM 14371 / CIP 107618 / JCM 11309 / KCTC 3954 / HTE831) protein is L-ectoine synthase.